Reading from the N-terminus, the 195-residue chain is U8 snoRNA-decapping enzyme (195 aa).

A Nudix hydrolase domain is found at 18 to 173; the sequence is GWRHACHALL…IGSAREQLLE (156 aa). Substrate contacts are provided by H24, R50, and F57. Residues G59, E76, E80, and H99 each contribute to the Mn(2+) site. The short motif at 61-82 is the Nudix box element; it reads FVDTQDRSLEDGLNRELREELG. Q170 provides a ligand contact to substrate. E173 serves as a coordination point for Mn(2+).

This sequence belongs to the Nudix hydrolase family. NUDT16 subfamily. In terms of assembly, homodimer. It depends on Mg(2+) as a cofactor. Mn(2+) is required as a cofactor. Co(2+) serves as cofactor. As to expression, expressed strongly in lung, kidney, adrenal gland, testis, heart and brain.

The protein localises to the nucleus. The protein resides in the nucleoplasm. It localises to the nucleolus. It is found in the cytoplasm. It catalyses the reaction a 5'-end (N(7)-methyl 5'-triphosphoguanosine)-ribonucleoside in mRNA + H2O = N(7)-methyl-GDP + a 5'-end phospho-ribonucleoside in mRNA + 2 H(+). The catalysed reaction is IDP + H2O = IMP + phosphate + H(+). It carries out the reaction dIDP + H2O = dIMP + phosphate + H(+). The enzyme catalyses a 5'-end NAD(+)-phospho-ribonucleoside in mRNA + H2O = a 5'-end phospho-adenosine-phospho-ribonucleoside in mRNA + beta-nicotinamide D-ribonucleotide + 2 H(+). It catalyses the reaction a 5'-end FAD-phospho-ribonucleoside in mRNA + H2O = a 5'-end phospho-adenosine-phospho-ribonucleoside in mRNA + FMN + 2 H(+). The catalysed reaction is a 5'-end CoA-ribonucleoside in mRNA + H2O = a 5'-end phospho-adenosine-phospho-ribonucleoside in mRNA + (R)-4'-phosphopantetheine + 2 H(+). The phosphatase activity is inhibited by the product IMP. In terms of biological role, RNA-binding and decapping enzyme that catalyzes the cleavage of the cap structure of snoRNAs and mRNAs in a metal-dependent manner. Part of the U8 snoRNP complex that is required for the accumulation of mature 5.8S and 28S rRNA. Has diphosphatase activity and removes m7G and/or m227G caps from U8 snoRNA and leaves a 5'monophosphate on the RNA. Also catalyzes the cleavage of the cap structure on mRNAs. Does not hydrolyze cap analog structures like 7-methylguanosine nucleoside triphosphate (m7GpppG). Also hydrolysis m7G- and m227G U3-capped RNAs but with less efficiencies. Has broad substrate specificity with manganese or cobalt as cofactor and can act on various RNA species. Binds to the U8 snoRNA; metal is not required for RNA-binding. May play a role in the regulation of snoRNAs and mRNAs degradation. Also acts as a phosphatase; hydrolyzes the non-canonical purine nucleotides inosine diphosphate (IDP) and deoxyinosine diphosphate (dITP) as well as guanosine diphosphate (GDP), deoxyguanosine diphosphate (dGDP), xanthine diphosphate (XDP), inosine triphosphate (ITP) and deoxyinosine triphosphate (ITP) to their respective monophosphate derivatives and does not distinguish between the deoxy- and ribose forms. The order of activity with different substrates is IDP &gt; dIDP &gt;&gt; GDP = dGDP &gt; XDP = ITP = dITP. Binds strongly to GTP, ITP and XTP. Participates in the hydrolysis of dIDP/IDP and probably excludes non-canonical purines from RNA and DNA precursor pools, thus preventing their incorporation into RNA and DNA and avoiding chromosomal lesions. Exhibits decapping activity towards NAD-capped RNAs and FAD-capped RNAs. Exhibits decapping activity towards dpCoA-capped RNAs in vitro. This Homo sapiens (Human) protein is U8 snoRNA-decapping enzyme (NUDT16).